Consider the following 792-residue polypeptide: uncharacterized protein (792 aa).

Substrate is bound at residue 361 to 362 (WD). The Proton donor role is filled by E488. Position 590-591 (590-591 (KQ)) interacts with substrate. A disordered region spans residues 753–792 (DSPSTIAVRDRKPLLPPPSQPPGREPVSRRHKSLIISAAR). Residues 766–776 (LLPPPSQPPGR) show a composition bias toward pro residues.

Belongs to the glycosyl hydrolase 65 family.

This is an uncharacterized protein from Mycobacterium leprae (strain TN).